Here is an 88-residue protein sequence, read N- to C-terminus: Small ribosomal subunit protein bS16 (88 aa).

Belongs to the bacterial ribosomal protein bS16 family.

In Baumannia cicadellinicola subsp. Homalodisca coagulata, this protein is Small ribosomal subunit protein bS16.